We begin with the raw amino-acid sequence, 363 residues long: UDP-N-acetylglucosamine--N-acetylmuramyl-(pentapeptide) pyrophosphoryl-undecaprenol N-acetylglucosamine transferase (363 aa).

Residues 10–12 (TGG), Asn124, Ser195, Ile250, and Gln295 each bind UDP-N-acetyl-alpha-D-glucosamine.

This sequence belongs to the glycosyltransferase 28 family. MurG subfamily.

It is found in the cell membrane. It carries out the reaction Mur2Ac(oyl-L-Ala-gamma-D-Glu-L-Lys-D-Ala-D-Ala)-di-trans,octa-cis-undecaprenyl diphosphate + UDP-N-acetyl-alpha-D-glucosamine = beta-D-GlcNAc-(1-&gt;4)-Mur2Ac(oyl-L-Ala-gamma-D-Glu-L-Lys-D-Ala-D-Ala)-di-trans,octa-cis-undecaprenyl diphosphate + UDP + H(+). Its pathway is cell wall biogenesis; peptidoglycan biosynthesis. Functionally, cell wall formation. Catalyzes the transfer of a GlcNAc subunit on undecaprenyl-pyrophosphoryl-MurNAc-pentapeptide (lipid intermediate I) to form undecaprenyl-pyrophosphoryl-MurNAc-(pentapeptide)GlcNAc (lipid intermediate II). This Lactiplantibacillus plantarum (strain ATCC BAA-793 / NCIMB 8826 / WCFS1) (Lactobacillus plantarum) protein is UDP-N-acetylglucosamine--N-acetylmuramyl-(pentapeptide) pyrophosphoryl-undecaprenol N-acetylglucosamine transferase.